The chain runs to 740 residues: ATP-dependent RNA helicase DDX1 (740 aa).

The segment at 1-295 is necessary for interaction with HNRNPK; the sequence is MAAFSEMGVM…APKALIVEPS (295 aa). The segment at 1-448 is interaction with dsRNA; that stretch reads MAAFSEMGVM…DTVHHVVVPV (448 aa). The necessary for interaction with RELA stretch occupies residues 1-525; sequence MAAFSEMGVM…KIDCDNLEQY (525 aa). The region spanning 2-428 is the Helicase ATP-binding domain; it reads AAFSEMGVMP…SEKIMHFPTW (427 aa). 46–53 is an ATP binding site; sequence AETGSGKT. One can recognise a B30.2/SPRY domain in the interval 70 to 247; that stretch reads DQQEGKKGKT…LKFNFGEEEF (178 aa). 2 positions are modified to N6-acetyllysine: lysine 239 and lysine 268. Residue lysine 281 is modified to N6-acetyllysine; alternate. A Glycyl lysine isopeptide (Lys-Gly) (interchain with G-Cter in SUMO2); alternate cross-link involves residue lysine 281. Positions 370-373 match the DEAD box motif; that stretch reads DEAD. Serine 481 carries the phosphoserine modification. Positions 493-681 constitute a Helicase C-terminal domain; it reads KGEYAVRAIK…QVEPDIKVPV (189 aa). Residues 525–740 are necessary for interaction with HNRNPK; it reads YFMQQGGGPD…YLPNQLFRTF (216 aa).

Belongs to the DEAD box helicase family. DDX1 subfamily. In terms of assembly, found in a multi-helicase-TICAM1 complex at least composed of DHX36, DDX1, DDX21 and TICAM1; this complex exists in resting cells with or without poly(I:C) RNA ligand stimulation. Interacts with DHX36. Interacts (via B30.2/SPRY domain) with DDX21 (via N-terminus); this interaction serves as bridges to TICAM1. Interacts with FAM98A (via N- and C-terminus). Interacts with PHF5A (via C-terminus). Interacts with MBNL1. Interacts with CSTF2. Interacts with HNRNPK. Interacts with ATM. Interacts with RELA (via C-terminus). Component of the tRNA-splicing ligase complex. Interacts with PQBP1. Interacts with ERCC6. In terms of processing, phosphorylated by ATM kinase; phosphorylation is increased in response to ionizing radiation (IR).

It is found in the nucleus. It localises to the cytoplasm. The protein resides in the cytoplasmic granule. Its subcellular location is the cytosol. The protein localises to the mitochondrion. The enzyme catalyses ATP + H2O = ADP + phosphate + H(+). In terms of biological role, acts as an ATP-dependent RNA helicase, able to unwind both RNA-RNA and RNA-DNA duplexes. Possesses 5' single-stranded RNA overhang nuclease activity. Possesses ATPase activity on various RNA, but not DNA polynucleotides. May play a role in RNA clearance at DNA double-strand breaks (DSBs), thereby facilitating the template-guided repair of transcriptionally active regions of the genome. Together with RELA, acts as a coactivator to enhance NF-kappa-B-mediated transcriptional activation. Acts as a positive transcriptional regulator of cyclin CCND2 expression. Binds to the cyclin CCND2 promoter region. Associates with chromatin at the NF-kappa-B promoter region via association with RELA. Binds to poly(A) RNA. May be involved in 3'-end cleavage and polyadenylation of pre-mRNAs. Component of the tRNA-splicing ligase complex required to facilitate the enzymatic turnover of catalytic subunit RTCB: together with archease (ZBTB8OS), acts by facilitating the guanylylation of RTCB, a key intermediate step in tRNA ligation. Component of a multi-helicase-TICAM1 complex that acts as a cytoplasmic sensor of viral double-stranded RNA (dsRNA) and plays a role in the activation of a cascade of antiviral responses including the induction of pro-inflammatory cytokines via the adapter molecule TICAM1. Specifically binds (via helicase ATP-binding domain) on both short and long poly(I:C) dsRNA. The protein is ATP-dependent RNA helicase DDX1 (DDX1) of Macaca fascicularis (Crab-eating macaque).